Here is a 479-residue protein sequence, read N- to C-terminus: Anaerobic nitric oxide reductase flavorubredoxin (479 aa).

The tract at residues 30-210 is zinc metallo-hydrolase; that stretch reads LRGSSYNSYL…PFSRLVTPKI (181 aa). Fe cation-binding residues include H79, E81, D83, H147, D166, and H227. Residues 254–393 form the Flavodoxin-like domain; it reads ITIFYDTMSN…LCRQHGRDIA (140 aa). Residues 260–264 and 342–369 each bind FMN; these read TMSNN and AFGSHGWSGGAVDRLSTRLQDAGFEMSL. The 52-residue stretch at 423 to 474 folds into the Rubredoxin-like domain; that stretch reads GPKMQCSVCQWIYDPALGEPLQDVAPGTPWSDVPDNFLCPECSLGKDVFDVL. C428, C431, C461, and C464 together coordinate Fe cation.

It in the N-terminal section; belongs to the zinc metallo-hydrolase group 3 family. As to quaternary structure, homotetramer. Requires Fe cation as cofactor. FMN is required as a cofactor.

It is found in the cytoplasm. Its pathway is nitrogen metabolism; nitric oxide reduction. Anaerobic nitric oxide reductase; uses NADH to detoxify nitric oxide (NO), protecting several 4Fe-4S NO-sensitive enzymes. Has at least 2 reductase partners, only one of which (NorW, flavorubredoxin reductase) has been identified. NO probably binds to the di-iron center; electrons enter from the NorW at rubredoxin and are transferred sequentially to the FMN center and the di-iron center. Also able to function as an aerobic oxygen reductase. This Salmonella paratyphi B (strain ATCC BAA-1250 / SPB7) protein is Anaerobic nitric oxide reductase flavorubredoxin.